The following is a 336-amino-acid chain: Malate dehydrogenase, cytoplasmic (336 aa).

Residues 11–17 (GAAGQIG) and Asp-42 contribute to the NAD(+) site. Substrate contacts are provided by Arg-92 and Arg-98. NAD(+) contacts are provided by residues Asn-105, Gln-112, and 129 to 131 (VGN). The substrate site is built by Asn-131 and Arg-163. The Proton acceptor role is filled by His-188.

This sequence belongs to the LDH/MDH superfamily. MDH type 2 family. As to quaternary structure, homodimer.

The protein localises to the cytoplasm. The enzyme catalyses (S)-malate + NAD(+) = oxaloacetate + NADH + H(+). Its function is as follows. Catalyzes the reversible conversion of (S)-malate to oxaloacetate in the cytoplasm where oxaloacetate is used for gluconeogenesis. This Caenorhabditis elegans protein is Malate dehydrogenase, cytoplasmic.